The sequence spans 624 residues: Phosphomethylpyrimidine synthase (624 aa).

Residues Asn231, Met260, Tyr289, His325, 345–347 (SRG), 386–389 (DGLR), and Glu425 each bind substrate. Residue His429 coordinates Zn(2+). A substrate-binding site is contributed by Tyr452. Position 493 (His493) interacts with Zn(2+). Residues Cys573, Cys576, and Cys581 each contribute to the [4Fe-4S] cluster site.

Belongs to the ThiC family. In terms of assembly, homodimer. [4Fe-4S] cluster serves as cofactor.

It catalyses the reaction 5-amino-1-(5-phospho-beta-D-ribosyl)imidazole + S-adenosyl-L-methionine = 4-amino-2-methyl-5-(phosphooxymethyl)pyrimidine + CO + 5'-deoxyadenosine + formate + L-methionine + 3 H(+). The protein operates within cofactor biosynthesis; thiamine diphosphate biosynthesis. In terms of biological role, catalyzes the synthesis of the hydroxymethylpyrimidine phosphate (HMP-P) moiety of thiamine from aminoimidazole ribotide (AIR) in a radical S-adenosyl-L-methionine (SAM)-dependent reaction. This Myxococcus xanthus (strain DK1622) protein is Phosphomethylpyrimidine synthase.